The chain runs to 199 residues: Achaete-scute homolog 1 (199 aa).

The tract at residues 37 to 56 (PAEEQQASKAKPIKRQRSAS) is disordered. Residues 81 to 133 (AAVARRNERERNRVKLVNLGFATLREHVPNGAANKKMSKVETLRSAVEYIRAL) form the bHLH domain. A compositionally biased stretch (polar residues) spans 162–179 (HDMNSMAGSPVSSYSSDE). The interval 162–189 (HDMNSMAGSPVSSYSSDEGSYDPLSPEE) is disordered.

Efficient DNA binding requires dimerization with another bHLH protein. In terms of tissue distribution, neuronal precursor cells.

It is found in the nucleus. Functionally, transcription factor that plays a key role in neuronal differentiation: acts as a pioneer transcription factor, accessing closed chromatin to allow other factors to bind and activate neural pathways. Directly binds the E box motif (5'-CANNTG-3') on promoters and promotes transcription of neuronal genes. The combination of three transcription factors, ASCL1, POU3F2/BRN2 and MYT1L, is sufficient to reprogram fibroblasts and other somatic cells into induced neuronal (iN) cells in vitro. The chain is Achaete-scute homolog 1 (ascl1) from Xenopus laevis (African clawed frog).